Reading from the N-terminus, the 960-residue chain is Dynamin-like GTPase OPA1, mitochondrial (960 aa).

A mitochondrion-targeting transit peptide spans methionine 1 to asparagine 87. Residues phenylalanine 88 to arginine 96 lie on the Mitochondrial matrix side of the membrane. The helical transmembrane segment at leucine 97–tyrosine 113 threads the bilayer. The Mitochondrial intermembrane portion of the chain corresponds to threonine 114 to aspartate 770. Residues serine 210–glycine 254 are a coiled coil. Residue lysine 228 is modified to N6-acetyllysine. One can recognise a Dynamin-type G domain in the interval glutamine 285 to glutamate 561. Residues glycine 295 to threonine 302 are G1 motif. The GTP site is built by serine 298, glycine 300, lysine 301, threonine 302, serine 303, and glycine 317. Threonine 302 is a Mg(2+) binding site. The G2 motif stretch occupies residues methionine 321–arginine 324. Mg(2+)-binding residues include threonine 323 and aspartate 398. Positions aspartate 398–glycine 401 are G3 motif. The interval threonine 467 to aspartate 470 is G4 motif. GTP is bound by residues lysine 468, aspartate 470, and threonine 503. A G5 motif region spans residues valine 501–glycine 504. Stalk region stretches follow at residues aspartate 589 to threonine 836 and cysteine 874 to leucine 928. Positions serine 736–cysteine 856 are paddle region. Residues tryptophan 771–arginine 781 lie within the membrane without spanning it. The Mitochondrial intermembrane segment spans residues threonine 782–lysine 960. Cysteines 856 and 874 form a disulfide. A coiled-coil region spans residues arginine 895–lysine 960.

The protein belongs to the TRAFAC class dynamin-like GTPase superfamily. Dynamin/Fzo/YdjA family. Oligomeric complex consisting of membrane-bound and soluble forms of OPA1. Interacts with RCC1L; RCC1L acts as a guanine nucleotide exchange factor (GEF) for OPA1 by exchanging bound GDP for free GTP. Interacts with CHCHD3 and IMMT; these interactions occur preferentially with soluble OPA1 forms. Interacts with PRELID1. In terms of processing, cleaved by OMA1 or YME1L downstream of the transmembrane region in response to different signals to generate soluble forms. Cleaved by OMA1 at position S1 following stress conditions, generating the short soluble form (Dynamin-like GTPase OPA1, short form; S-OPA1). AFG3L2 is involved in the regulation of OMA1-dependent processing of OPA1. PARL-dependent proteolytic processing releases an antiapoptotic soluble form not required for mitochondrial fusion.

Its subcellular location is the mitochondrion inner membrane. The protein localises to the mitochondrion intermembrane space. The enzyme catalyses GTP + H2O = GDP + phosphate + H(+). Activated by guanine nucleotide exchange factor RCC1L. Its function is as follows. Dynamin-related GTPase that is essential for normal mitochondrial morphology by mediating fusion of the mitochondrial inner membranes, regulating cristae morphology and maintaining respiratory chain function. Exists in two forms: the transmembrane, long form (Dynamin-like GTPase OPA1, long form; L-OPA1), which is tethered to the inner mitochondrial membrane, and the short soluble form (Dynamin-like GTPase OPA1, short form; S-OPA1), which results from proteolytic cleavage and localizes in the intermembrane space. Both forms (L-OPA1 and S-OPA1) cooperate to catalyze the fusion of the mitochondrial inner membrane. The equilibrium between L-OPA1 and S-OPA1 is essential: excess levels of S-OPA1, produced by cleavage by OMA1 following loss of mitochondrial membrane potential, lead to an impaired equilibrium between L-OPA1 and S-OPA1, inhibiting mitochondrial fusion. The balance between L-OPA1 and S-OPA1 also influences cristae shape and morphology. Involved in remodeling cristae and the release of cytochrome c during apoptosis. Proteolytic processing by PARL in response to intrinsic apoptotic signals may lead to disassembly of OPA1 oligomers and release of the caspase activator cytochrome C (CYCS) into the mitochondrial intermembrane space. Acts as a regulator of T-helper Th17 cells, which are characterized by cells with fused mitochondria with tight cristae, by mediating mitochondrial membrane remodeling: OPA1 is required for interleukin-17 (IL-17) production. Its role in mitochondrial morphology is required for mitochondrial genome maintenance. In terms of biological role, constitutes the transmembrane long form (L-OPA1) that plays a central role in mitochondrial inner membrane fusion and cristae morphology. L-OPA1 and the soluble short form (S-OPA1) form higher-order helical assemblies that coordinate the fusion of mitochondrial inner membranes. Inner membrane-anchored L-OPA1 molecules initiate membrane remodeling by recruiting soluble S-OPA1 to rapidly polymerize into a flexible cylindrical scaffold encaging the mitochondrial inner membrane. Once at the membrane surface, the formation of S-OPA1 helices induce bilayer curvature. OPA1 dimerization through the paddle region, which inserts into cardiolipin-containing membrane, promotes GTP hydrolysis and the helical assembly of a flexible OPA1 lattice on the membrane, which drives membrane curvature and mitochondrial fusion. Plays a role in the maintenance and remodeling of mitochondrial cristae, some invaginations of the mitochondrial inner membrane that provide an increase in the surface area. Probably acts by forming helical filaments at the inside of inner membrane tubes with the shape and dimensions of crista junctions. The equilibrium between L-OPA1 and S-OPA1 influences cristae shape and morphology: increased L-OPA1 levels promote cristae stacking and elongated mitochondria, while increased S-OPA1 levels correlated with irregular cristae packing and round mitochondria shape. Constitutes the soluble short form (S-OPA1) generated by cleavage by OMA1, which plays a central role in mitochondrial inner membrane fusion and cristae morphology. The transmembrane long form (L-OPA1) and the S-OPA1 form higher-order helical assemblies that coordinate the fusion of mitochondrial inner membranes. Inner membrane-anchored L-OPA1 molecules initiate membrane remodeling by recruiting soluble S-OPA1 to rapidly polymerize into a flexible cylindrical scaffold encaging the mitochondrial inner membrane. Once at the membrane surface, the formation of S-OPA1 helices induce bilayer curvature. OPA1 dimerization through the paddle region, which inserts into cardiolipin-containing membrane, promotes GTP hydrolysis and the helical assembly of a flexible OPA1 lattice on the membrane, which drives membrane curvature and mitochondrial fusion. Excess levels of S-OPA1 produced by cleavage by OMA1 following stress conditions that induce loss of mitochondrial membrane potential, lead to an impaired equilibrium between L-OPA1 and S-OPA1, thereby inhibiting mitochondrial fusion. Involved in mitochondrial safeguard in response to transient mitochondrial membrane depolarization by mediating flickering: cleavage by OMA1 leads to excess production of S-OPA1, preventing mitochondrial hyperfusion. Plays a role in the maintenance and remodeling of mitochondrial cristae, some invaginations of the mitochondrial inner membrane that provide an increase in the surface area. Probably acts by forming helical filaments at the inside of inner membrane tubes with the shape and dimensions of crista junctions. The equilibrium between L-OPA1 and S-OPA1 influences cristae shape and morphology: increased L-OPA1 levels promote cristae stacking and elongated mitochondria, while increased S-OPA1 levels correlated with irregular cristae packing and round mitochondria shape. In Pongo abelii (Sumatran orangutan), this protein is Dynamin-like GTPase OPA1, mitochondrial.